The sequence spans 102 residues: uncharacterized protein (102 aa).

The first 19 residues, 1–19 (MFLFCFVLFCSLVFPLARG), serve as a signal peptide directing secretion.

This is an uncharacterized protein from Saccharomyces cerevisiae (strain ATCC 204508 / S288c) (Baker's yeast).